The primary structure comprises 306 residues: Type 3 secretion system translocon protein SctB (306 aa).

The helical transmembrane segment at 128-152 threads the bilayer; it reads LMIAMAVVSGIMAATSTVASAFSIA.

It belongs to the SctB/YopD family. The core secretion machinery of the T3SS is composed of approximately 20 different proteins, including cytoplasmic components, a base, an export apparatus and a needle. This subunit is involved in the formation of a pore, called the translocon, in host membrane. Interacts with YopB/SctE and YopE. Together with YopB/SctE, forms a multimeric integral membrane complex with a mass of between 500 and 700 kDa. Interacts with its cognate chaperone SycD.

Its subcellular location is the secreted. It is found in the host membrane. Component of the type III secretion system (T3SS), also called injectisome, which is used to inject bacterial effector proteins into eukaryotic host cells. YopB/SctE and YopD/SctB are inserted into the host membrane where they form a pore and allow the translocation of effector proteins into the cytosol of target cells. Its function is as follows. Involved in pathogenesis. Essential for the establishment of Yersinia infections in a mouse model system, but not for the targeting of effector Yops. May modulate the host's immune response at a distance from the site of infection. The chain is Type 3 secretion system translocon protein SctB from Yersinia enterocolitica.